Reading from the N-terminus, the 329-residue chain is uncharacterized protein (329 aa).

A run of 10 helical transmembrane segments spans residues 9 to 29, 53 to 73, 105 to 125, 126 to 146, 154 to 174, 179 to 199, 210 to 230, 240 to 260, 273 to 293, and 296 to 316; these read LMGL…NVIV, SHSF…MALI, FLMF…PTGI, AITL…RLFN, WLVI…AYGG, LVLG…YTVF, VPFT…CLII, WLAI…GHVL, AAII…LAIQ, and LTNI…LLNY. 2 EamA domains span residues 103–169 and 191–316; these read CGFL…LTIP and IVYA…LLNY.

Belongs to the EamA transporter family.

It is found in the cell membrane. This is an uncharacterized protein from Synechocystis sp. (strain ATCC 27184 / PCC 6803 / Kazusa).